A 327-amino-acid polypeptide reads, in one-letter code: MQFIDQANIILKAGKGGNGIVSFRREKFVPAGGPSGGNGGKGGSIIIIADNNLQTLLDFKFNREIFAKDGFKGGPNKRSGASGENTILKVPCGTEIRDFNTGIILGDLTEDKQSLTIAHGGRGGHGNAYYLSNQNRAPESFTEGKEGEIWEVQLELKLLAEVGIIGLPNAGKSTLISVLSSARPKIANYPFTTLIPNLGVVRKADGNGCLFADIPGLISGAAEGVGLGHDFLRHIQRTKILIHLIDSIAENPIRDFEIIEKELKRYGSGLLNKERIVVLNKMELVDENYLQTITKKLENLSKKKVLVISSSLRKGLSPLLSEVWKRI.

In terms of domain architecture, Obg spans Met1–Leu159. An OBG-type G domain is found at Ala160 to Ile327. Residues Gly166–Ser173, Phe191–Ile195, Asp213–Gly216, Asn280–Glu283, and Ser309–Ser311 each bind ATP. Residues Ser173 and Thr193 each coordinate Mg(2+).

It belongs to the TRAFAC class OBG-HflX-like GTPase superfamily. OBG GTPase family. Monomer. Mg(2+) serves as cofactor.

Its subcellular location is the cytoplasm. In terms of biological role, an essential GTPase which binds GTP, GDP and possibly (p)ppGpp with moderate affinity, with high nucleotide exchange rates and a fairly low GTP hydrolysis rate. Plays a role in control of the cell cycle, stress response, ribosome biogenesis and in those bacteria that undergo differentiation, in morphogenesis control. This chain is GTPase Obg, found in Prochlorococcus marinus subsp. pastoris (strain CCMP1986 / NIES-2087 / MED4).